The sequence spans 1128 residues: GTPase-activating protein BEM3 (1128 aa).

The disordered stretch occupies residues 194 to 241 (SSPTKIHSEQLASPAASVTYTTSRITIKSPNKGSKSPLQERLRSPQNP). Positions 209–230 (ASVTYTTSRITIKSPNKGSKSP) are enriched in polar residues. At serine 254 the chain carries Phosphoserine. Disordered regions lie at residues 345–391 (EDLV…TPLS) and 418–486 (PVLT…RPHA). Residues 366-375 (LPPPPAPPTF) are compositionally biased toward pro residues. Composition is skewed to polar residues over residues 382 to 391 (GNIKNSTPLS) and 420 to 478 (LTSS…QGSL). In terms of domain architecture, PH spans 634–741 (DNVKDGSLLL…WLSAFSDYID (108 aa)). Disordered stretches follow at residues 746-777 (LSLS…NATI) and 796-838 (NNNI…DSRR). Residues 752-764 (RNANDTDSASHLS) are compositionally biased toward polar residues. Residues 796-815 (NNNISNSSNNIANSDGIDSN) show a composition bias toward low complexity. Residues 816–829 (PSSHSNFLASSSGN) are compositionally biased toward polar residues. The 216-residue stretch at 913-1128 (LRLSSHKYQN…EKVDIHIPQV (216 aa)) folds into the Rho-GAP domain.

It is found in the cytoplasm. GTPase-activating protein (GAP) for CDC42 and less efficiently for RHO1. Negative regulator of the pheromone-response pathway through the STE20 protein kinase. This chain is GTPase-activating protein BEM3 (BEM3), found in Saccharomyces cerevisiae (strain ATCC 204508 / S288c) (Baker's yeast).